The primary structure comprises 378 residues: 4-hydroxy-3-methylbut-2-en-1-yl diphosphate synthase (flavodoxin) (378 aa).

Cysteine 268, cysteine 271, cysteine 303, and glutamate 310 together coordinate [4Fe-4S] cluster.

It belongs to the IspG family. [4Fe-4S] cluster is required as a cofactor.

The catalysed reaction is (2E)-4-hydroxy-3-methylbut-2-enyl diphosphate + oxidized [flavodoxin] + H2O + 2 H(+) = 2-C-methyl-D-erythritol 2,4-cyclic diphosphate + reduced [flavodoxin]. It participates in isoprenoid biosynthesis; isopentenyl diphosphate biosynthesis via DXP pathway; isopentenyl diphosphate from 1-deoxy-D-xylulose 5-phosphate: step 5/6. In terms of biological role, converts 2C-methyl-D-erythritol 2,4-cyclodiphosphate (ME-2,4cPP) into 1-hydroxy-2-methyl-2-(E)-butenyl 4-diphosphate. The protein is 4-hydroxy-3-methylbut-2-en-1-yl diphosphate synthase (flavodoxin) of Corynebacterium efficiens (strain DSM 44549 / YS-314 / AJ 12310 / JCM 11189 / NBRC 100395).